A 277-amino-acid chain; its full sequence is Caspase-3 (277 aa).

M1 bears the N-acetylmethionine mark. Propeptides lie at residues 1-9 (MENNKTSVD) and 10-28 (SKSIKTLETKILHGSKSMD). An N6-acetyllysine modification is found at K11. Position 26 is a phosphoserine (S26). Residues H121 and C163 contribute to the active site. The residue at position 163 (C163) is an S-nitrosocysteine; in inhibited form.

The protein belongs to the peptidase C14A family. In terms of assembly, heterotetramer that consists of two anti-parallel arranged heterodimers, each one formed by a 17 kDa (p17) and a 12 kDa (p12) subunit. Interacts with BIRC6/bruce. As to quaternary structure, (Microbial infection) Subunit p17 interacts with African swine fever virus (ASFV) inhibitor of apoptosis protein. Cleavage by granzyme B, caspase-6, caspase-8 and caspase-10 generates the two active subunits. Additional processing of the propeptides is likely due to the autocatalytic activity of the activated protease. Active heterodimers between the small subunit of caspase-7 protease and the large subunit of caspase-3 also occur and vice versa. Post-translationally, S-nitrosylated on its catalytic site cysteine in unstimulated cell lines and denitrosylated upon activation of the Fas apoptotic pathway, associated with an increase in intracellular caspase activity. Fas therefore activates caspase-3 not only by inducing the cleavage of the caspase zymogen to its active subunits, but also by stimulating the denitrosylation of its active site thiol. In terms of processing, ubiquitinated by BIRC6; this activity is inhibited by DIABLO/SMAC.

It localises to the cytoplasm. The catalysed reaction is Strict requirement for an Asp residue at positions P1 and P4. It has a preferred cleavage sequence of Asp-Xaa-Xaa-Asp-|- with a hydrophobic amino-acid residue at P2 and a hydrophilic amino-acid residue at P3, although Val or Ala are also accepted at this position.. Its activity is regulated as follows. Inhibited by BIRC6; following inhibition of BIRC6-caspase binding by DIABLO/SMAC, BIRC6 is subjected to caspase cleavage, leading to an increase in active caspases. Its function is as follows. Involved in the activation cascade of caspases responsible for apoptosis execution. At the onset of apoptosis, it proteolytically cleaves poly(ADP-ribose) polymerase PARP1 at a '216-Asp-|-Gly-217' bond. Cleaves and activates sterol regulatory element binding proteins (SREBPs) between the basic helix-loop-helix leucine zipper domain and the membrane attachment domain. Cleaves and activates caspase-6, -7 and -9 (CASP6, CASP7 and CASP9, respectively). Cleaves and inactivates interleukin-18 (IL18). Triggers cell adhesion in sympathetic neurons through RET cleavage. Cleaves IL-1 beta between an Asp and an Ala, releasing the mature cytokine which is involved in a variety of inflammatory processes. Cleaves and inhibits serine/threonine-protein kinase AKT1 in response to oxidative stress. Acts as an inhibitor of type I interferon production during virus-induced apoptosis by mediating cleavage of antiviral proteins CGAS, IRF3 and MAVS, thereby preventing cytokine overproduction. Also involved in pyroptosis by mediating cleavage and activation of gasdermin-E (GSDME). Cleaves XRCC4 and phospholipid scramblase proteins XKR4, XKR8 and XKR9, leading to promote phosphatidylserine exposure on apoptotic cell surface. Cleaves BIRC6 following inhibition of BIRC6-caspase binding by DIABLO/SMAC. In Sus scrofa (Pig), this protein is Caspase-3 (CASP3).